The sequence spans 130 residues: Small ribosomal subunit protein uS9 (130 aa).

The protein belongs to the universal ribosomal protein uS9 family.

This chain is Small ribosomal subunit protein uS9, found in Vibrio campbellii (strain ATCC BAA-1116).